The primary structure comprises 652 residues: DNA ligase (652 aa).

Residues 29–33 (DSEYD), 78–79 (SL), and Glu-107 each bind NAD(+). Lys-109 functions as the N6-AMP-lysine intermediate in the catalytic mechanism. NAD(+)-binding residues include Arg-130, Glu-164, Lys-278, and Lys-302. Cys-395, Cys-398, Cys-413, and Cys-418 together coordinate Zn(2+). The BRCT domain occupies 577 to 652 (AADAVLSGKT…IQDEAWLEQL (76 aa)).

It belongs to the NAD-dependent DNA ligase family. LigA subfamily. Requires Mg(2+) as cofactor. The cofactor is Mn(2+).

It carries out the reaction NAD(+) + (deoxyribonucleotide)n-3'-hydroxyl + 5'-phospho-(deoxyribonucleotide)m = (deoxyribonucleotide)n+m + AMP + beta-nicotinamide D-nucleotide.. Functionally, DNA ligase that catalyzes the formation of phosphodiester linkages between 5'-phosphoryl and 3'-hydroxyl groups in double-stranded DNA using NAD as a coenzyme and as the energy source for the reaction. It is essential for DNA replication and repair of damaged DNA. The sequence is that of DNA ligase from Streptococcus gordonii (strain Challis / ATCC 35105 / BCRC 15272 / CH1 / DL1 / V288).